Consider the following 234-residue polypeptide: Ribose-5-phosphate isomerase A (234 aa).

Residues 28-31 (TGST), 85-88 (DGAD), and 98-101 (KGLG) contribute to the substrate site. Glu-107 acts as the Proton acceptor in catalysis. Lys-125 is a substrate binding site.

Belongs to the ribose 5-phosphate isomerase family. As to quaternary structure, homodimer.

It catalyses the reaction aldehydo-D-ribose 5-phosphate = D-ribulose 5-phosphate. It participates in carbohydrate degradation; pentose phosphate pathway; D-ribose 5-phosphate from D-ribulose 5-phosphate (non-oxidative stage): step 1/1. Functionally, catalyzes the reversible conversion of ribose-5-phosphate to ribulose 5-phosphate. This is Ribose-5-phosphate isomerase A from Roseiflexus castenholzii (strain DSM 13941 / HLO8).